The sequence spans 164 residues: Ribosome maturation factor RimM (164 aa).

Positions 90–161 (EGRYYVADII…EIIIKPVKTW (72 aa)) constitute a PRC barrel domain.

It belongs to the RimM family. In terms of assembly, binds ribosomal protein uS19.

Its subcellular location is the cytoplasm. Functionally, an accessory protein needed during the final step in the assembly of 30S ribosomal subunit, possibly for assembly of the head region. Essential for efficient processing of 16S rRNA. May be needed both before and after RbfA during the maturation of 16S rRNA. It has affinity for free ribosomal 30S subunits but not for 70S ribosomes. This is Ribosome maturation factor RimM from Clostridium tetani (strain Massachusetts / E88).